The sequence spans 211 residues: Probable GTP-binding protein EngB (211 aa).

The EngB-type G domain maps to 26–200 (SGIEVAFAGR…RQKLDNWFST (175 aa)). GTP contacts are provided by residues 34 to 41 (GRSNAGKS), 61 to 65 (GRTQL), 79 to 82 (DLPG), 146 to 149 (TKAD), and 179 to 181 (FSS). S41 and T63 together coordinate Mg(2+).

Belongs to the TRAFAC class TrmE-Era-EngA-EngB-Septin-like GTPase superfamily. EngB GTPase family. It depends on Mg(2+) as a cofactor.

In terms of biological role, necessary for normal cell division and for the maintenance of normal septation. In Pectobacterium carotovorum subsp. carotovorum (strain PC1), this protein is Probable GTP-binding protein EngB.